We begin with the raw amino-acid sequence, 307 residues long: Urease accessory protein UreD (307 aa).

The protein belongs to the UreD family. UreD, UreF and UreG form a complex that acts as a GTP-hydrolysis-dependent molecular chaperone, activating the urease apoprotein by helping to assemble the nickel containing metallocenter of UreC. The UreE protein probably delivers the nickel.

It localises to the cytoplasm. Functionally, required for maturation of urease via the functional incorporation of the urease nickel metallocenter. The sequence is that of Urease accessory protein UreD from Prochlorococcus marinus (strain NATL2A).